A 582-amino-acid polypeptide reads, in one-letter code: V-type ATP synthase alpha chain (582 aa).

Residue 231–238 (GPFGSGKT) coordinates ATP.

It belongs to the ATPase alpha/beta chains family.

The enzyme catalyses ATP + H2O + 4 H(+)(in) = ADP + phosphate + 5 H(+)(out). Its function is as follows. Produces ATP from ADP in the presence of a proton gradient across the membrane. The V-type alpha chain is a catalytic subunit. This chain is V-type ATP synthase alpha chain, found in Deinococcus geothermalis (strain DSM 11300 / CIP 105573 / AG-3a).